The primary structure comprises 200 residues: Dephospho-CoA kinase (200 aa).

The DPCK domain occupies 3–200 (IIGLTGGIGS…LWQRFATQVE (198 aa)). 11–16 (GSGKST) is a binding site for ATP.

It belongs to the CoaE family.

It localises to the cytoplasm. The catalysed reaction is 3'-dephospho-CoA + ATP = ADP + CoA + H(+). Its pathway is cofactor biosynthesis; coenzyme A biosynthesis; CoA from (R)-pantothenate: step 5/5. Functionally, catalyzes the phosphorylation of the 3'-hydroxyl group of dephosphocoenzyme A to form coenzyme A. The sequence is that of Dephospho-CoA kinase from Corynebacterium diphtheriae (strain ATCC 700971 / NCTC 13129 / Biotype gravis).